The following is a 511-amino-acid chain: MALSNTLSLSSSKSLVQSHLLHNPLPQPRFSLFPTTQHGRRHPISAVHAAEPSKTAVKQGKWSLDSWKTKKALQLPEYPDEKELESVLKTLEMNPPLVFAGEARSLEEKLGEAALGKAFLLQGGDCAESFKEFNANNIRDTFRILLQMSVVLMFGGQVPVIKVGRMAGQFAKPRSDPLEEINGVKLPSYKGDNINGDTFDEKSRIPDPHRLIRAYMQSAATLNLLRAFATGGYAAMQRVTEWNLDFVENCEQGDRYQELAHRVDEALGFMAAAGLTVDHPIMSTTDFWTSHECLLLPYEQALTREDSTSGLFYDCSAHMVWVGERTRQLDGAHVEFLRGVANPLGIKVSQKMDPNELIKLIDILNPANKPGRITVIVRMGAENMRVKLSHLVRAVRGAGQIVTWVCDPMHGNTIKAPCGLKTRAFDSILAEVRAFFDVHEQEGSHPGGIHLEMTGQNVTECIGGSRTVTYDDLGSRYHTHCDPRLNASQSLELSFIVAERLRRRRMSTQRL.

Belongs to the class-II DAHP synthase family. As to expression, leaves, stems, tuber and roots.

Its subcellular location is the plastid. The protein localises to the chloroplast. It catalyses the reaction D-erythrose 4-phosphate + phosphoenolpyruvate + H2O = 7-phospho-2-dehydro-3-deoxy-D-arabino-heptonate + phosphate. The protein operates within metabolic intermediate biosynthesis; chorismate biosynthesis; chorismate from D-erythrose 4-phosphate and phosphoenolpyruvate: step 1/7. This Solanum tuberosum (Potato) protein is Phospho-2-dehydro-3-deoxyheptonate aldolase 2, chloroplastic (SHKB).